Consider the following 849-residue polypeptide: BRCT-containing protein 1 (849 aa).

3 consecutive BRCT domains span residues 1–75 (MLAA…FYSC), 76–167 (NPYL…PYLF), and 282–370 (PSVG…DFPV). Disordered regions lie at residues 453 to 519 (QSAD…ASSD) and 606 to 632 (KKRR…NTNA). The segment covering 480–493 (ELQDEGRLEIDAKS) has biased composition (basic and acidic residues). 2 BRCT domains span residues 625–715 (SESR…PYLL) and 738–843 (QGPS…RIAD).

Interacts with gammaH2A; binds phosphohistone H2A (gammaH2A) formed by Rad3/ATR checkpoint kinase at DNA lesions. Interacts with Rhp18/Rad18. Interacts with Nse5-Nse6; this allows to tether Smc5-Smc6 at replicative DNA lesions.

The protein localises to the nucleus. It localises to the chromosome. Its function is as follows. Required for resumption of chromosome replication after DNA damage, specifically in S phase. Is recruited to chromatin in response to stalled replication forks and acts as a scaffold during DNA repair. Required for the accumulation of the Smc5-Smc6 genome stability complex in foci during replication stress and for activation of the intrinsic SUMO ligase activity of the complex by collapsed replication forks. In pericentromeric heterochromatin, enhances Clr4/Suv39-mediated H3 Lys-9 dimethylation (H3K9me2), required for stabilization of stalled replication forks and accurate chromosome segregation during mitosis. Functionally, required for mitotic fidelity, specifically in the G2 phase of the cell cycle. Plays a role in chromatin organization. The polypeptide is BRCT-containing protein 1 (brc1) (Schizosaccharomyces pombe (strain 972 / ATCC 24843) (Fission yeast)).